A 118-amino-acid polypeptide reads, in one-letter code: Large ribosomal subunit protein uL18 (118 aa).

Belongs to the universal ribosomal protein uL18 family. In terms of assembly, part of the 50S ribosomal subunit; part of the 5S rRNA/L5/L18/L25 subcomplex. Contacts the 5S and 23S rRNAs.

Functionally, this is one of the proteins that bind and probably mediate the attachment of the 5S RNA into the large ribosomal subunit, where it forms part of the central protuberance. The chain is Large ribosomal subunit protein uL18 from Campylobacter lari (strain RM2100 / D67 / ATCC BAA-1060).